A 473-amino-acid chain; its full sequence is Probable dipeptidase (473 aa).

Cys10 is an active-site residue.

It belongs to the peptidase C69 family.

It catalyses the reaction an L-aminoacyl-L-amino acid + H2O = 2 an L-alpha-amino acid. The chain is Probable dipeptidase from Latilactobacillus sakei (Lactobacillus sakei).